The sequence spans 399 residues: Acetate kinase (399 aa).

N10 serves as a coordination point for Mg(2+). Position 17 (K17) interacts with ATP. R91 provides a ligand contact to substrate. Catalysis depends on D150, which acts as the Proton donor/acceptor. Residues 210-214, 285-287, and 333-337 contribute to the ATP site; these read HLGNG, DFR, and GIGEN. Mg(2+) is bound at residue E387.

This sequence belongs to the acetokinase family. As to quaternary structure, homodimer. The cofactor is Mg(2+). Mn(2+) serves as cofactor.

It localises to the cytoplasm. It catalyses the reaction acetate + ATP = acetyl phosphate + ADP. It functions in the pathway metabolic intermediate biosynthesis; acetyl-CoA biosynthesis; acetyl-CoA from acetate: step 1/2. Catalyzes the formation of acetyl phosphate from acetate and ATP. Can also catalyze the reverse reaction. This Wigglesworthia glossinidia brevipalpis protein is Acetate kinase.